Here is a 170-residue protein sequence, read N- to C-terminus: Putative pre-16S rRNA nuclease (170 aa).

The segment covering 1 to 18 has biased composition (basic and acidic residues); the sequence is MGTDDRLPDRPGADDPGR. Residues 1–22 form a disordered region; that stretch reads MGTDDRLPDRPGADDPGRGRRI.

Belongs to the YqgF nuclease family.

Its subcellular location is the cytoplasm. In terms of biological role, could be a nuclease involved in processing of the 5'-end of pre-16S rRNA. This chain is Putative pre-16S rRNA nuclease, found in Mycolicibacterium smegmatis (strain ATCC 700084 / mc(2)155) (Mycobacterium smegmatis).